Here is a 636-residue protein sequence, read N- to C-terminus: Alpha-L-iduronidase (636 aa).

The N-terminal stretch at 1–16 (MLSLLLVLTTLARIHA) is a signal peptide. Residues proline 39, isoleucine 43, and histidine 45 each coordinate alpha-D-mannopyranose. Residues histidine 78, asparagine 169, and glutamate 170 each contribute to the alpha-L-iduronate site. The Proton donor role is filled by glutamate 170. Asparagine 180 carries an N-linked (GlcNAc...) asparagine glycan. Lysine 257 contributes to the alpha-L-iduronate binding site. N-linked (GlcNAc...) asparagine glycosylation occurs at asparagine 268. Positions 293 and 299 each coordinate alpha-L-iduronate. Residue glutamate 293 is the Nucleophile of the active site. Position 300 (tryptophan 300) interacts with alpha-D-mannopyranose. Alpha-L-iduronate contacts are provided by aspartate 342 and arginine 356. Residues asparagine 365, asparagine 448, asparagine 453, and asparagine 483 are each glycosylated (N-linked (GlcNAc...) asparagine). Residues cysteine 529 and cysteine 565 are joined by a disulfide bond. Asparagine 622 carries N-linked (GlcNAc...) asparagine glycosylation.

The protein belongs to the glycosyl hydrolase 39 family.

The protein localises to the lysosome. The catalysed reaction is Hydrolysis of unsulfated alpha-L-iduronosidic linkages in dermatan sulfate.. Its function is as follows. Essential lysosomal hydrolase responsible for the degradation of glycosaminoglycans (GAG) such as heparan sulfate. Required for lysosome function and autophagy. Consequently, has an essential role in the development, maintenance and function of various cells, tissues, and organs, including the muscles and the central nervous system (CNS). This is Alpha-L-iduronidase from Drosophila melanogaster (Fruit fly).